Reading from the N-terminus, the 356-residue chain is MAATRSPTRARERERSGAPAAGSDQVHSWMLATSQALDTVWRMAKGFVMLAVSFLVAAICYFRRLHLYSGHKLKWWIGYLQRKFKRNLSVEAEVDLLSYCAREWKGETPRNKLMRKAYEELFWRHHIKCVRQVRRDNYDALRSVLFQIFSQGISFPSWMKEKDIVKLPEKLLFSQGCNWIQQYSFGPEKYTGSNVFGKLRKYVELLKTQWTEFNGIRDYHKRGSMCNTLFSDAILEYKLYEALKFIMLYQVTEVYEQMKTKKVIPSLFRLLFSRETSSDPLSFMMNHLNSVGDTCGLEQIDMFILGYSLEVKIKVFRLFKFNSRDFEVCYPEEPLRDWPEISLLTENDRHYHIPVF.

The segment at 1-22 is disordered; that stretch reads MAATRSPTRARERERSGAPAAG. Positions 1 to 83 are required for membrane binding; sequence MAATRSPTRA…KWWIGYLQRK (83 aa). In terms of domain architecture, OTU spans 128-356; that stretch reads KCVRQVRRDN…NDRHYHIPVF (229 aa).

Belongs to the peptidase C65 family. Otulin subfamily. In terms of assembly, does not bind ubiquitin or ubiquitin-like proteins.

It is found in the cytoplasm. The protein localises to the endoplasmic reticulum membrane. Its subcellular location is the nucleus envelope. Lacks deubiquitinase activity. The chain is Inactive ubiquitin thioesterase OTULINL from Homo sapiens (Human).